We begin with the raw amino-acid sequence, 249 residues long: Sugar fermentation stimulation protein homolog (249 aa).

It belongs to the SfsA family.

This Synechococcus sp. (strain CC9902) protein is Sugar fermentation stimulation protein homolog.